Consider the following 60-residue polypeptide: Large ribosomal subunit protein bL32 (60 aa).

The segment at Met-1–Lys-21 is disordered. The segment covering His-7–Tyr-20 has biased composition (basic residues).

Belongs to the bacterial ribosomal protein bL32 family.

This Streptococcus equi subsp. zooepidemicus (strain H70) protein is Large ribosomal subunit protein bL32.